The sequence spans 259 residues: Flap endonuclease Xni (259 aa).

Asp109 is a binding site for Mg(2+). The 5'-3' exonuclease domain occupies Val165–Ser255. Positions 176, 185, 187, and 190 each coordinate K(+). Residues Gly189–Ala194 are interaction with DNA.

It belongs to the Xni family. Mg(2+) serves as cofactor. The cofactor is K(+).

Its function is as follows. Has flap endonuclease activity. During DNA replication, flap endonucleases cleave the 5'-overhanging flap structure that is generated by displacement synthesis when DNA polymerase encounters the 5'-end of a downstream Okazaki fragment. The sequence is that of Flap endonuclease Xni from Vibrio cholerae serotype O1 (strain ATCC 39315 / El Tor Inaba N16961).